The following is a 275-amino-acid chain: NH(3)-dependent NAD(+) synthetase (275 aa).

Residue 46-53 (GISGGQDS) coordinates ATP. Mg(2+) is bound at residue aspartate 52. Arginine 140 contacts deamido-NAD(+). Position 160 (threonine 160) interacts with ATP. Residue glutamate 165 coordinates Mg(2+). The deamido-NAD(+) site is built by lysine 173 and aspartate 180. Lysine 189 and threonine 211 together coordinate ATP. 260–261 (HK) is a deamido-NAD(+) binding site.

Belongs to the NAD synthetase family. In terms of assembly, homodimer.

It catalyses the reaction deamido-NAD(+) + NH4(+) + ATP = AMP + diphosphate + NAD(+) + H(+). It functions in the pathway cofactor biosynthesis; NAD(+) biosynthesis; NAD(+) from deamido-NAD(+) (ammonia route): step 1/1. Its function is as follows. Catalyzes the ATP-dependent amidation of deamido-NAD to form NAD. Uses ammonia as a nitrogen source. The protein is NH(3)-dependent NAD(+) synthetase of Escherichia fergusonii (strain ATCC 35469 / DSM 13698 / CCUG 18766 / IAM 14443 / JCM 21226 / LMG 7866 / NBRC 102419 / NCTC 12128 / CDC 0568-73).